A 325-amino-acid polypeptide reads, in one-letter code: Tetraacyldisaccharide 4'-kinase (325 aa).

58 to 65 (TVGGSGKT) is an ATP binding site.

This sequence belongs to the LpxK family.

The enzyme catalyses a lipid A disaccharide + ATP = a lipid IVA + ADP + H(+). Its pathway is glycolipid biosynthesis; lipid IV(A) biosynthesis; lipid IV(A) from (3R)-3-hydroxytetradecanoyl-[acyl-carrier-protein] and UDP-N-acetyl-alpha-D-glucosamine: step 6/6. Transfers the gamma-phosphate of ATP to the 4'-position of a tetraacyldisaccharide 1-phosphate intermediate (termed DS-1-P) to form tetraacyldisaccharide 1,4'-bis-phosphate (lipid IVA). In Coxiella burnetii (strain CbuG_Q212) (Coxiella burnetii (strain Q212)), this protein is Tetraacyldisaccharide 4'-kinase.